The following is a 1139-amino-acid chain: Solute carrier family 12 member 5 (1139 aa).

2 disordered regions span residues 1–63 and 92–116; these read MSRR…GKEY and TNLP…KPVQ. Residues 1–98 are Cytoplasmic-facing; sequence MSRRFTVTSL…ANYTNLPQGS (98 aa). The span at 19–45 shows a compositional bias: basic and acidic residues; that stretch reads PDPESRRHSVADPRHLPGEDVKGDGNP. A compositionally biased stretch (polar residues) spans 46–55; the sequence is KESSPFINST. T57 carries the post-translational modification Phosphothreonine. Residues 98–111 are compositionally biased toward basic and acidic residues; it reads SREHEEAENNEGGK. A discontinuously helical membrane pass occupies residues 99–120; sequence REHEEAENNEGGKKKPVQAPRM. K113 contributes to the K(+) binding site. Over 121 to 129 the chain is Extracellular; it reads GTFMGVYLP. Residues 130–151 traverse the membrane as a helical segment; that stretch reads CLQNIFGVILFLRLTWVVGIAG. Residues 152-174 lie on the Cytoplasmic side of the membrane; sequence IMESFCMVFICCSCTMLTAISMS. The helical transmembrane segment at 175–203 threads the bilayer; it reads AIATNGVVPAGGSYYMISRSLGPEFGGAV. A chloride-binding site is contributed by A184. Residues 204–229 are Extracellular-facing; that stretch reads GLCFYLGTTFAGAMYILGTIEILLAY. A run of 2 helical transmembrane segments spans residues 230–250 and 251–276; these read LFPA…AAML and NNMR…KYVN. Residues 277-402 are Extracellular-facing; it reads KFALVFLGCV…ERSGMTSVGL (126 aa). C310 and C325 are joined by a disulfide. N314, N333, N351, and N362 each carry an N-linked (GlcNAc...) asparagine glycan. Residues C345 and C354 are joined by a disulfide bond. A helical membrane pass occupies residues 403-420; that stretch reads ADGTPIDMDHPYVFSDMT. Residue M410 coordinates K(+). 2 residues coordinate chloride: Y414 and V415. At 421–429 the chain is on the cytoplasmic side; that stretch reads SYFTLLVGI. Residues 430 to 453 form a helical membrane-spanning segment; sequence YFPSVTGIMAGSNRSGDLRDAQKS. K(+) is bound at residue D446. Topologically, residues 454–485 are extracellular; it reads IPTGTILAIATTSAVYISSVVLFGACIEGVVL. A helical transmembrane segment spans residues 486-513; that stretch reads RDKFGEAVNGNLVVGTLAWPSPWVIVIG. The Cytoplasmic portion of the chain corresponds to 514 to 534; sequence SFFSTCGAGLQSLTGAPRLLQ. Helical transmembrane passes span 535 to 555 and 556 to 578; these read AISR…KANG and EPTW…ASLD. Chloride is bound at residue E569. At 579-592 the chain is on the cytoplasmic side; the sequence is EVAPILSMFFLMCY. 2 consecutive transmembrane segments (helical) span residues 593 to 615 and 616 to 632; these read MFVN…PRFR and YYHW…CLAL. The Cytoplasmic segment spans residues 633–1139; that stretch reads MFICSWYYAL…GGREVITIYS (507 aa). The interval 667-681 is scissor helix; the sequence is GIRGLSLSAARYALL. T929 is subject to Phosphothreonine; by OXSR1 and STK39. Residues 942–1052 form a disordered region; the sequence is MHLTKNERER…GPSPVSSEGI (111 aa). Over residues 945–962 the composition is skewed to basic and acidic residues; that stretch reads TKNEREREIQSITDESRG. The span at 982-994 shows a compositional bias: acidic residues; the sequence is TAGDSEEKPEEEV. The span at 1003–1012 shows a compositional bias: low complexity; it reads PSCPSSSPSP. The span at 1023 to 1042 shows a compositional bias: basic and acidic residues; it reads DPEKVHLTWTKDKSVAEKNK. At T1030 the chain carries Phosphothreonine; by OXSR1 and STK39. A phosphoserine mark is found at S1045, S1048, and S1049.

It belongs to the SLC12A transporter family. K/Cl co-transporter subfamily. In terms of assembly, homodimer; adopts a domain-swap conformation at the scissor helices connecting the transmembrane domain and C-terminal domain. Heterodimer with K-Cl cotransporters SLC12A6 and SLC12A7. Interacts with AP2A1. Phosphorylated at Thr-929 and Thr-1030 by OXSR1/OSR1 and STK39/SPAK downstream of WNK kinases (WNK1, WNK2, WNK3 or WNK4), inhibiting the potassium-chloride cotransport activity. Brain specific. Detected in neuronal cells.

It is found in the cell membrane. The protein resides in the cell projection. It localises to the dendrite. It carries out the reaction K(+)(in) + chloride(in) = K(+)(out) + chloride(out). Its activity is regulated as follows. Inhibited following phosphorylation by OXSR1/OSR1 and STK39/SPAK: phosphorylation takes place downstream of WNK kinases (WNK1, WNK2, WNK3 or WNK4) in response to hyperosmotic stress and subsequent cell shrinkage. Functionally, mediates electroneutral potassium-chloride cotransport in mature neurons and is required for neuronal Cl(-) homeostasis. As major extruder of intracellular chloride, it establishes the low neuronal Cl(-) levels required for chloride influx after binding of GABA-A and glycine to their receptors, with subsequent hyperpolarization and neuronal inhibition. Involved in the regulation of dendritic spine formation and maturation. The chain is Solute carrier family 12 member 5 from Homo sapiens (Human).